The primary structure comprises 316 residues: tRNA dimethylallyltransferase (316 aa).

ATP is bound at residue 19–26 (GPTASGKT). 21–26 (TASGKT) serves as a coordination point for substrate. Interaction with substrate tRNA stretches follow at residues 44 to 47 (DSAL), 168 to 172 (QRITR), and 249 to 254 (RCVGYR).

The protein belongs to the IPP transferase family. As to quaternary structure, monomer. Requires Mg(2+) as cofactor.

The catalysed reaction is adenosine(37) in tRNA + dimethylallyl diphosphate = N(6)-dimethylallyladenosine(37) in tRNA + diphosphate. Its function is as follows. Catalyzes the transfer of a dimethylallyl group onto the adenine at position 37 in tRNAs that read codons beginning with uridine, leading to the formation of N6-(dimethylallyl)adenosine (i(6)A). This is tRNA dimethylallyltransferase from Colwellia psychrerythraea (strain 34H / ATCC BAA-681) (Vibrio psychroerythus).